A 104-amino-acid polypeptide reads, in one-letter code: MASELKEYLVIIPDLPDVLAKRQVLLKPHNQDAAPLVKAGRVPFFGSTLAHHSAEGQQVAENGTVMIIKAESEEEIKEIIRKDIFTIEGVWDFGRLSIWPFKSK.

This sequence belongs to the YciI family.

The protein operates within mycotoxin biosynthesis. In terms of biological role, part of the gene cluster that mediates the biosynthesis of fusaric acid, a mycotoxin with low to moderate toxicity to animals and humans, but with high phytotoxic properties. L-aspartate is suggested as fusaric acid amino acid precursor that is activated and further processed to O-acetyl-L-homoserine by cluster enzymes aspartate kinase FUB3 and homoserine O-acetyltransferase FUB5, as well as enzymes of the primary metabolism. The polyketide synthase (PKS) FUB1 generates the triketide trans-2-hexenal which is presumptively released by the hydrolase FUB4 and linked to the NRPS-bound amino acid precursor by NAD(P)-dependent dehydrogenase FUB6. FUB1, FUB4, and the non-canonical NRPS Fub8 may form an enzyme complex. Further processing of the NRPS-bound intermediate might be carried out by FUB6 and the sulfhydrylase FUB7, enabling a spontaneous electrocyclization to close the carbon backbone of fusaric acid. Dihydrofusaric acid is likely to be released via reduction by the thioester reductase (TR) domain of FUB8 whereupon the final oxidation to fusaric acid may (also) be performed by the FMN-dependent dehydrogenase FUB9. This is Fusaric acid biosynthesis protein 2 from Gibberella moniliformis (strain M3125 / FGSC 7600) (Maize ear and stalk rot fungus).